The sequence spans 328 residues: L-lactate dehydrogenase (328 aa).

NAD(+) is bound by residues valine 18, glutamate 39, lysine 46, tyrosine 71, and glycine 85 to alanine 86. Substrate-binding residues include glutamine 88 and arginine 94. NAD(+)-binding positions include serine 107, alanine 124–asparagine 126, and serine 149. Asparagine 126–aspartate 129 contributes to the substrate binding site. A substrate-binding site is contributed by aspartate 154–arginine 157. Beta-D-fructose 1,6-bisphosphate-binding residues include arginine 159 and histidine 174. Histidine 181 serves as the catalytic Proton acceptor. Tyrosine 226 is modified (phosphotyrosine). Threonine 235 lines the substrate pocket.

The protein belongs to the LDH/MDH superfamily. LDH family. Homotetramer.

It localises to the cytoplasm. It carries out the reaction (S)-lactate + NAD(+) = pyruvate + NADH + H(+). It functions in the pathway fermentation; pyruvate fermentation to lactate; (S)-lactate from pyruvate: step 1/1. Its activity is regulated as follows. Allosterically activated by fructose 1,6-bisphosphate (FBP). Catalyzes the conversion of lactate to pyruvate. This Streptococcus thermophilus (strain CNRZ 1066) protein is L-lactate dehydrogenase.